A 158-amino-acid polypeptide reads, in one-letter code: MTVEKSYYMTQEGKDKLEEELHYLKTDRRQEVVERIKVARDFGDLSENSEYDAAKDEQAFVEQRITQVEKMIRNAVIIENDNDNPNIVSLGKSVSFVELPDGDEETYTIVGSAEADPFEGKISNDSPMATSLLGKEIGEEVTVTTPGGDIDVRITNVE.

Residues 47-75 adopt a coiled-coil conformation; it reads ENSEYDAAKDEQAFVEQRITQVEKMIRNA.

Belongs to the GreA/GreB family.

In terms of biological role, necessary for efficient RNA polymerase transcription elongation past template-encoded arresting sites. The arresting sites in DNA have the property of trapping a certain fraction of elongating RNA polymerases that pass through, resulting in locked ternary complexes. Cleavage of the nascent transcript by cleavage factors such as GreA or GreB allows the resumption of elongation from the new 3'terminus. GreA releases sequences of 2 to 3 nucleotides. The polypeptide is Transcription elongation factor GreA (Oceanobacillus iheyensis (strain DSM 14371 / CIP 107618 / JCM 11309 / KCTC 3954 / HTE831)).